The sequence spans 23 residues: Protein male-specific 40 (23 aa).

During early embryogenesis expression is initially detected at the early cleavage stages in the nucleus of two discrete cells. Subsequently, expression is abundant in the cytoplasm of the newly formed pole cells. Male-specific expression during the third larval instar.

Its subcellular location is the cytoplasm. The protein localises to the nucleus. The polypeptide is Protein male-specific 40 (Drosophila melanogaster (Fruit fly)).